The following is a 262-amino-acid chain: 3-methyl-2-oxobutanoate hydroxymethyltransferase (262 aa).

Residues Asp-44 and Asp-83 each coordinate Mg(2+). 3-methyl-2-oxobutanoate-binding positions include 44 to 45 (DS), Asp-83, and Lys-113. Glu-115 is a binding site for Mg(2+). Glu-182 functions as the Proton acceptor in the catalytic mechanism.

This sequence belongs to the PanB family. In terms of assembly, homodecamer; pentamer of dimers. It depends on Mg(2+) as a cofactor.

Its subcellular location is the cytoplasm. It carries out the reaction 3-methyl-2-oxobutanoate + (6R)-5,10-methylene-5,6,7,8-tetrahydrofolate + H2O = 2-dehydropantoate + (6S)-5,6,7,8-tetrahydrofolate. It functions in the pathway cofactor biosynthesis; (R)-pantothenate biosynthesis; (R)-pantoate from 3-methyl-2-oxobutanoate: step 1/2. Its function is as follows. Catalyzes the reversible reaction in which hydroxymethyl group from 5,10-methylenetetrahydrofolate is transferred onto alpha-ketoisovalerate to form ketopantoate. The protein is 3-methyl-2-oxobutanoate hydroxymethyltransferase of Picosynechococcus sp. (strain ATCC 27264 / PCC 7002 / PR-6) (Agmenellum quadruplicatum).